The sequence spans 530 residues: N-acetylmuramoyl-L-alanine amidase (530 aa).

A signal peptide spans 1–22 (MKAWGALWIVLGLLLWPEPGAA). N-linked (GlcNAc...) asparagine glycosylation is found at Asn-61, Asn-80, and Asn-174. Ser-219 is modified (phosphoserine). An N-linked (GlcNAc...) asparagine glycan is attached at Asn-335. Residues 386–512 (FLYVHHTYVP…RQLVLTHCPG (127 aa)) enclose the N-acetylmuramoyl-L-alanine amidase domain. His-390 serves as a coordination point for Zn(2+). Cys-399 and Cys-405 form a disulfide bridge. Residue Asn-465 is glycosylated (N-linked (GlcNAc...) asparagine). His-502 and Cys-510 together coordinate Zn(2+).

Belongs to the N-acetylmuramoyl-L-alanine amidase 2 family. Zn(2+) serves as cofactor. In terms of tissue distribution, strongly expressed in liver and fetal liver.

The protein resides in the secreted. Its subcellular location is the membrane. It catalyses the reaction Hydrolyzes the link between N-acetylmuramoyl residues and L-amino acid residues in certain cell-wall glycopeptides.. In terms of biological role, may play a scavenger role by digesting biologically active peptidoglycan (PGN) into biologically inactive fragments. Has no direct bacteriolytic activity. In Mus musculus (Mouse), this protein is N-acetylmuramoyl-L-alanine amidase (Pglyrp2).